The sequence spans 81 residues: uncharacterized protein (81 aa).

This sequence to M.thermoautotrophicum MTH886.

This is an uncharacterized protein from Methanocaldococcus jannaschii (strain ATCC 43067 / DSM 2661 / JAL-1 / JCM 10045 / NBRC 100440) (Methanococcus jannaschii).